A 133-amino-acid chain; its full sequence is Serine/threonine-protein kinase RsbT (133 aa).

It carries out the reaction L-seryl-[protein] + ATP = O-phospho-L-seryl-[protein] + ADP + H(+). The catalysed reaction is L-threonyl-[protein] + ATP = O-phospho-L-threonyl-[protein] + ADP + H(+). Its function is as follows. Provides the crucial link between the upstream module (communication of environmental stress) and the downstream module (integration of the environmental signals with signals of energy stress) that compose the signal transduction pathway controlling the sigma-B factor. Phosphorylates and inactivates its specific antagonist protein RsbS thanks to its serine kinase activity. Upon phosphorylation of RsbS, RsbT is released to stimulate RsbU, a PP2C phosphatase, thereby initiating the signaling cascade that ultimately activates sigma-B. The activity of the RsbU phosphatase may be stimulated by a long-lived interaction with RsbT and the serine kinase function of RsbT is not required to directly modify RsbU. Also phosphorylates RsbR thanks to its threonine kinase activity, preventing it to phosphorylate RsbT. The sequence is that of Serine/threonine-protein kinase RsbT (rsbT) from Bacillus subtilis (strain 168).